We begin with the raw amino-acid sequence, 185 residues long: MQSLKHHFLLAMPHLDDPNFKGTLTYLCDHDENGTMGVIVNRPMELTLDALLEQLELDAAECPCREMPVHYGGPVHKDRGFILHRGSSLPWDSSLQVADDIALTTSMDMLKAIANGQGPEDFIVCLGCAAWQAGQLEDELKQNTWLTVEGDASILFEVHAEQRLSAAAGILGIDLNLMSREAGHS.

Belongs to the UPF0301 (AlgH) family.

The sequence is that of UPF0301 protein Csal_0058 from Chromohalobacter salexigens (strain ATCC BAA-138 / DSM 3043 / CIP 106854 / NCIMB 13768 / 1H11).